The primary structure comprises 838 residues: E3 ubiquitin-protein ligase RNF19A (838 aa).

Positions 41-61 are disordered; that stretch reads DRDLQSSASSVSLPSVKKAPK. Positions 46–57 are enriched in low complexity; that stretch reads SSASSVSLPSVK. The interval 128–351 is TRIAD supradomain; sequence DFIECPLCLL…LSPSGCTFWG (224 aa). Zn(2+)-binding residues include cysteine 132, cysteine 135, cysteine 150, histidine 152, cysteine 155, cysteine 158, cysteine 176, cysteine 179, cysteine 219, cysteine 224, cysteine 241, cysteine 246, cysteine 251, cysteine 254, histidine 259, cysteine 264, cysteine 301, and cysteine 304. An RING-type 1 zinc finger spans residues 132–179; it reads CPLCLLRHSKDRFPDIMTCHHRSCVDCLRQYLRIEISESRVNISCPEC. The segment at 199-264 adopts an IBR-type zinc-finger fold; that stretch reads EKYEEFMLRR…KQIWHPNQTC (66 aa). The segment at 301-332 adopts an RING-type 2; atypical zinc-finger fold; sequence CPRCAAYIIKMNDGSCNHMTCAVCGCEFCWLC. Cysteine 316 is a catalytic residue. Residues cysteine 321, cysteine 324, cysteine 329, cysteine 332, histidine 340, and cysteine 347 each coordinate Zn(2+). The next 2 helical transmembrane spans lie at 368–388 and 424–444; these read LVGA…AMII and VIVS…IMLA. 2 disordered regions span residues 622–685 and 700–721; these read SKPS…GNMK and QQST…PSVA. Residues 630–662 show a composition bias toward polar residues; the sequence is NSGSSSVDDGSATRSHAGGSSSGLPEGKSSATK. At serine 631 the chain carries Phosphoserine. The interval 660–838 is interaction with CASR; that stretch reads ATKWSKEATA…ELKVAIQTEI (179 aa). Over residues 671 to 683 the composition is skewed to basic residues; it reads KKSKSGKLRKKGN. Polar residues predominate over residues 700–717; it reads QQSTNSSEFEAPSLSDSM.

The protein belongs to the RBR family. RNF19 subfamily. In terms of assembly, interacts with UBE2L3 and UBE2L6. Interacts with transcription factor Sp1. Interacts with VCP, CASR, SNCAIP and with some SOD1 variants which cause amyotrophic lateral sclerosis, but not with wild-type SOD1. Widely expressed, with highest levels in heart. Ubiquitously expressed in the central nervous system.

It localises to the membrane. The protein localises to the cytoplasm. Its subcellular location is the cytoskeleton. The protein resides in the microtubule organizing center. It is found in the centrosome. The enzyme catalyses [E2 ubiquitin-conjugating enzyme]-S-ubiquitinyl-L-cysteine + [acceptor protein]-L-lysine = [E2 ubiquitin-conjugating enzyme]-L-cysteine + [acceptor protein]-N(6)-ubiquitinyl-L-lysine.. It participates in protein modification; protein ubiquitination. E3 ubiquitin-protein ligase which accepts ubiquitin from E2 ubiquitin-conjugating enzymes UBE2L3 and UBE2L6 in the form of a thioester and then directly transfers the ubiquitin to targeted substrates, such as SNCAIP or CASR. Specifically ubiquitinates pathogenic SOD1 variants, which leads to their proteasomal degradation and to neuronal protection. The protein is E3 ubiquitin-protein ligase RNF19A (RNF19A) of Homo sapiens (Human).